The sequence spans 136 residues: Ig heavy chain V region BCL1 (136 aa).

The N-terminal stretch at 1–19 (MGWSCIIFFLVATATGVHS) is a signal peptide. An Ig-like domain is found at 20 to 135 (QVQLQQSGPE…WGQGTTLTVS (116 aa)).

The sequence is that of Ig heavy chain V region BCL1 from Mus musculus (Mouse).